A 452-amino-acid polypeptide reads, in one-letter code: Cell division protein FtsZ (452 aa).

GTP is bound by residues 24-28 (GAGSN), 111-113 (GTG), E142, R146, and D190. The interval 432 to 452 (DQDNKESDIHDIPAFLRKKRD) is disordered. Positions 433–442 (QDNKESDIHD) are enriched in basic and acidic residues.

Belongs to the FtsZ family. In terms of assembly, homodimer. Polymerizes to form a dynamic ring structure in a strictly GTP-dependent manner. Interacts directly with several other division proteins.

The protein localises to the cytoplasm. In terms of biological role, essential cell division protein that forms a contractile ring structure (Z ring) at the future cell division site. The regulation of the ring assembly controls the timing and the location of cell division. One of the functions of the FtsZ ring is to recruit other cell division proteins to the septum to produce a new cell wall between the dividing cells. Binds GTP and shows GTPase activity. The chain is Cell division protein FtsZ from Rickettsia conorii (strain ATCC VR-613 / Malish 7).